Here is a 363-residue protein sequence, read N- to C-terminus: Chorismate synthase (363 aa).

Arg-47 contributes to the NADP(+) binding site. Residues 124–126 (RAS), Gly-286, 301–305 (KPTAT), and Arg-327 each bind FMN.

This sequence belongs to the chorismate synthase family. In terms of assembly, homotetramer. FMNH2 serves as cofactor.

It catalyses the reaction 5-O-(1-carboxyvinyl)-3-phosphoshikimate = chorismate + phosphate. The protein operates within metabolic intermediate biosynthesis; chorismate biosynthesis; chorismate from D-erythrose 4-phosphate and phosphoenolpyruvate: step 7/7. Catalyzes the anti-1,4-elimination of the C-3 phosphate and the C-6 proR hydrogen from 5-enolpyruvylshikimate-3-phosphate (EPSP) to yield chorismate, which is the branch point compound that serves as the starting substrate for the three terminal pathways of aromatic amino acid biosynthesis. This reaction introduces a second double bond into the aromatic ring system. The sequence is that of Chorismate synthase from Prochlorococcus marinus (strain MIT 9211).